Reading from the N-terminus, the 131-residue chain is Large ribosomal subunit protein bL17 (131 aa).

It belongs to the bacterial ribosomal protein bL17 family. As to quaternary structure, part of the 50S ribosomal subunit. Contacts protein L32.

This chain is Large ribosomal subunit protein bL17, found in Bordetella parapertussis (strain 12822 / ATCC BAA-587 / NCTC 13253).